The primary structure comprises 466 residues: Paraneoplastic antigen Ma3 homolog (466 aa).

Residues 379-408 form a disordered region; that stretch reads RPYQGSRRRRHRRRGQHRKGGVPRDDSQGT. Residues 384–399 are compositionally biased toward basic residues; the sequence is SRRRRHRRRGQHRKGG. Residues 415-432 form a CCHC-type zinc finger; that stretch reads TFCYSCGEDGHIRVHCFN. Residues 441 to 466 form a disordered region; sequence QKRQAAMEKGNRSWAWEKSHPKPKTK. Positions 445–460 are enriched in basic and acidic residues; it reads AAMEKGNRSWAWEKSH.

The protein belongs to the PNMA family. As to expression, expressed in the cerebrum and cerebellum.

The protein localises to the nucleus. It is found in the nucleolus. This chain is Paraneoplastic antigen Ma3 homolog (Pnma3), found in Mus musculus (Mouse).